The sequence spans 1146 residues: DNA polymerase II large subunit (1146 aa).

This sequence belongs to the archaeal DNA polymerase II family. In terms of assembly, heterodimer of a large subunit and a small subunit.

The catalysed reaction is DNA(n) + a 2'-deoxyribonucleoside 5'-triphosphate = DNA(n+1) + diphosphate. It carries out the reaction Exonucleolytic cleavage in the 3'- to 5'-direction to yield nucleoside 5'-phosphates.. Functionally, possesses two activities: a DNA synthesis (polymerase) and an exonucleolytic activity that degrades single-stranded DNA in the 3'- to 5'-direction. Has a template-primer preference which is characteristic of a replicative DNA polymerase. This chain is DNA polymerase II large subunit, found in Methanosarcina barkeri (strain Fusaro / DSM 804).